A 54-amino-acid chain; its full sequence is Rubredoxin (54 aa).

Residues 2-52 form the Rubredoxin-like domain; the sequence is AKWVCKICGYIYDEDAGDPDNGISPGTKFEELPDDWVCPICGAPKSEFEKL. Residues cysteine 6, cysteine 9, cysteine 39, and cysteine 42 each contribute to the Fe cation site.

It belongs to the rubredoxin family. Fe(3+) serves as cofactor.

Functionally, rubredoxin is a small nonheme, iron protein lacking acid-labile sulfide. Its single Fe, chelated to 4 Cys, functions as an electron acceptor and may also stabilize the conformation of the molecule. The polypeptide is Rubredoxin (rub) (Pyrococcus furiosus (strain ATCC 43587 / DSM 3638 / JCM 8422 / Vc1)).